The primary structure comprises 432 residues: Glutamate-1-semialdehyde 2,1-aminomutase 1 (432 aa).

At lysine 272 the chain carries N6-(pyridoxal phosphate)lysine.

It belongs to the class-III pyridoxal-phosphate-dependent aminotransferase family. HemL subfamily. As to quaternary structure, homodimer. Pyridoxal 5'-phosphate is required as a cofactor.

Its subcellular location is the cytoplasm. The enzyme catalyses (S)-4-amino-5-oxopentanoate = 5-aminolevulinate. Its pathway is porphyrin-containing compound metabolism; protoporphyrin-IX biosynthesis; 5-aminolevulinate from L-glutamyl-tRNA(Glu): step 2/2. This chain is Glutamate-1-semialdehyde 2,1-aminomutase 1, found in Exiguobacterium sp. (strain ATCC BAA-1283 / AT1b).